Consider the following 178-residue polypeptide: Large ribosomal subunit protein uL10 (178 aa).

The protein belongs to the universal ribosomal protein uL10 family. In terms of assembly, part of the ribosomal stalk of the 50S ribosomal subunit. The N-terminus interacts with L11 and the large rRNA to form the base of the stalk. The C-terminus forms an elongated spine to which L12 dimers bind in a sequential fashion forming a multimeric L10(L12)X complex.

In terms of biological role, forms part of the ribosomal stalk, playing a central role in the interaction of the ribosome with GTP-bound translation factors. This is Large ribosomal subunit protein uL10 from Leuconostoc mesenteroides subsp. mesenteroides (strain ATCC 8293 / DSM 20343 / BCRC 11652 / CCM 1803 / JCM 6124 / NCDO 523 / NBRC 100496 / NCIMB 8023 / NCTC 12954 / NRRL B-1118 / 37Y).